Reading from the N-terminus, the 135-residue chain is uncharacterized protein (135 aa).

This sequence belongs to the transcriptional regulatory CopG/NikR family.

This is an uncharacterized protein from Methanocaldococcus jannaschii (strain ATCC 43067 / DSM 2661 / JAL-1 / JCM 10045 / NBRC 100440) (Methanococcus jannaschii).